The chain runs to 110 residues: Large ribosomal subunit protein uL22 (110 aa).

It belongs to the universal ribosomal protein uL22 family. As to quaternary structure, part of the 50S ribosomal subunit.

In terms of biological role, this protein binds specifically to 23S rRNA; its binding is stimulated by other ribosomal proteins, e.g. L4, L17, and L20. It is important during the early stages of 50S assembly. It makes multiple contacts with different domains of the 23S rRNA in the assembled 50S subunit and ribosome. The globular domain of the protein is located near the polypeptide exit tunnel on the outside of the subunit, while an extended beta-hairpin is found that lines the wall of the exit tunnel in the center of the 70S ribosome. This Histophilus somni (strain 2336) (Haemophilus somnus) protein is Large ribosomal subunit protein uL22.